The following is a 180-amino-acid chain: Bifunctional protein PyrR (180 aa).

The short motif at V101–T113 is the PRPP-binding element.

This sequence belongs to the purine/pyrimidine phosphoribosyltransferase family. PyrR subfamily. As to quaternary structure, homodimer and homohexamer; in equilibrium.

It catalyses the reaction UMP + diphosphate = 5-phospho-alpha-D-ribose 1-diphosphate + uracil. Regulates transcriptional attenuation of the pyrimidine nucleotide (pyr) operon by binding in a uridine-dependent manner to specific sites on pyr mRNA. This disrupts an antiterminator hairpin in the RNA and favors formation of a downstream transcription terminator, leading to a reduced expression of downstream genes. In terms of biological role, also displays a weak uracil phosphoribosyltransferase activity which is not physiologically significant. The chain is Bifunctional protein PyrR from Bacillus cytotoxicus (strain DSM 22905 / CIP 110041 / 391-98 / NVH 391-98).